The sequence spans 160 residues: Ribonuclease P protein component 2 (160 aa).

Belongs to the eukaryotic/archaeal RNase P protein component 2 family. As to quaternary structure, consists of a catalytic RNA component and at least 4-5 protein subunits.

Its subcellular location is the cytoplasm. It catalyses the reaction Endonucleolytic cleavage of RNA, removing 5'-extranucleotides from tRNA precursor.. Functionally, part of ribonuclease P, a protein complex that generates mature tRNA molecules by cleaving their 5'-ends. The chain is Ribonuclease P protein component 2 from Methanosphaerula palustris (strain ATCC BAA-1556 / DSM 19958 / E1-9c).